Reading from the N-terminus, the 574-residue chain is Sulfate adenylyltransferase (574 aa).

Positions 1 to 169 (MANPPHGGVL…IEAINKLNHY (169 aa)) are N-terminal. The tract at residues 170 to 394 (DYVALRYTPA…LRESSPPRHT (225 aa)) is catalytic. Gln-197 provides a ligand contact to sulfate. Residues 197 to 200 (QTRN) and 291 to 294 (GRDH) each bind ATP. Residues Thr-198, Arg-199, and Asn-200 contribute to the active site. Arg-199 serves as a coordination point for sulfate. Ala-295 serves as a coordination point for sulfate. Val-333 serves as a coordination point for ATP. Residues 395–574 (QGFTIFLTGY…LETEGFFDRS (180 aa)) are allosteric regulation domain; adenylyl-sulfate kinase-like. 3'-phosphoadenylyl sulfate is bound by residues 434–437 (DTVR), Arg-451, 477–478 (IA), and Arg-516.

In the N-terminal section; belongs to the sulfate adenylyltransferase family. The protein in the C-terminal section; belongs to the APS kinase family. Homohexamer. Dimer of trimers.

It localises to the cytoplasm. It carries out the reaction sulfate + ATP + H(+) = adenosine 5'-phosphosulfate + diphosphate. It functions in the pathway sulfur metabolism; hydrogen sulfide biosynthesis; sulfite from sulfate: step 1/3. Its activity is regulated as follows. Allosterically inhibited by 3'-phosphoadenosine 5'-phosphosulfate (PAPS). Catalyzes the first intracellular reaction of sulfate assimilation, forming adenosine-5'-phosphosulfate (APS) from inorganic sulfate and ATP. Plays an important role in sulfate activation as a component of the biosynthesis pathway of sulfur-containing amino acids. The protein is Sulfate adenylyltransferase of Aspergillus fumigatus (strain ATCC MYA-4609 / CBS 101355 / FGSC A1100 / Af293) (Neosartorya fumigata).